The chain runs to 81 residues: MQSLEILAIVALVVAAILAIVVWTIVGIEIRKTLRQKKIDRLIDRIRERAEDSGNESDGDEEELSALVEMGHHAPWDVDDL.

The Extracellular segment spans residues 1 to 7; that stretch reads MQSLEIL. Residues 8–28 form a helical membrane-spanning segment; it reads AIVALVVAAILAIVVWTIVGI. The Cytoplasmic segment spans residues 29 to 81; sequence EIRKTLRQKKIDRLIDRIRERAEDSGNESDGDEEELSALVEMGHHAPWDVDDL. Residues 50–81 are disordered; sequence AEDSGNESDGDEEELSALVEMGHHAPWDVDDL. Phosphoserine; by host CK2 is present on residues Ser-53 and Ser-57. A compositionally biased stretch (acidic residues) spans 53–64; that stretch reads SGNESDGDEEEL. Positions 70 to 81 are enriched in basic and acidic residues; that stretch reads MGHHAPWDVDDL.

Belongs to the HIV-1 VPU protein family. In terms of assembly, homopentamer. Interacts with host CD4 and BRTC; these interactions induce proteasomal degradation of CD4. Interacts with host BST2; this interaction leads to the degradation of host BST2. Interacts with host FBXW11. Interacts with host AP1M1; this interaction plays a role in the mistrafficking and subsequent degradation of host BST2. Interacts with host RANBP2; this interaction allows Vpu to down-regulate host BLM sumoylation. Phosphorylated by host CK2. This phosphorylation is necessary for interaction with human BTRC and degradation of CD4.

Its subcellular location is the host membrane. Its activity is regulated as follows. Ion channel activity is inhibited by hexamethylene amiloride in vitro. Functionally, enhances virion budding by targeting host CD4 and Tetherin/BST2 to proteasome degradation. Degradation of CD4 prevents any unwanted premature interactions between viral Env and its host receptor CD4 in the endoplasmic reticulum. Degradation of antiretroviral protein Tetherin/BST2 is important for virion budding, as BST2 tethers new viral particles to the host cell membrane. Mechanistically, Vpu bridges either CD4 or BST2 to BTRC, a substrate recognition subunit of the Skp1/Cullin/F-box protein E3 ubiquitin ligase, induces their ubiquitination and subsequent proteasomal degradation. The alteration of the E3 ligase specificity by Vpu seems to promote the degradation of host IKBKB, leading to NF-kappa-B down-regulation and subsequent apoptosis. Acts as a viroporin that forms an oligomeric ion channel in membranes. Modulates the host DNA repair mechanisms to promote degradation of nuclear viral cDNA in cells that are already productively infected in order to suppress immune sensing and proviral hyper-integration (superinfection). Manipulates PML-NBs and modulates SUMOylation of host BLM protein thereby enhancing its DNA-end processing activity toward viral unintegrated linear DNA. Also inhibits RAD52-mediated homologous repair of viral cDNA, preventing the generation of dead-end circular forms of single copies of the long terminal repeat and permitting sustained nucleolytic attack. This chain is Protein Vpu, found in Homo sapiens (Human).